The following is a 145-amino-acid chain: Hemoglobin subunit beta-A (145 aa).

Residues 1–145 (MLTAEEKAAV…VANALAHRYH (145 aa)) enclose the Globin domain. Positions 62 and 91 each coordinate heme b.

It belongs to the globin family. Heterotetramer of two alpha chains and two beta chains. In terms of tissue distribution, red blood cells.

Involved in oxygen transport from the lung to the various peripheral tissues. In Bos javanicus (Wild banteng), this protein is Hemoglobin subunit beta-A.